Reading from the N-terminus, the 300-residue chain is Probable alpha-L-glutamate ligase (300 aa).

The ATP-grasp domain occupies 104–287; the sequence is LQLLARQGID…IAGRMIEYIE (184 aa). ATP contacts are provided by residues Lys141, 178-179, Asp187, and 211-213; these read EY and RSN. Mg(2+) is bound by residues Asp248, Glu260, and Asn262. The Mn(2+) site is built by Asp248, Glu260, and Asn262.

Belongs to the RimK family. The cofactor is Mg(2+). It depends on Mn(2+) as a cofactor.

This chain is Probable alpha-L-glutamate ligase, found in Serratia proteamaculans (strain 568).